We begin with the raw amino-acid sequence, 206 residues long: Inner membrane-spanning protein YciB (206 aa).

Transmembrane regions (helical) follow at residues 22 to 42 (IYTA…LTYF), 50 to 70 (MQVI…FLHD), 76 to 96 (WKVT…HIMG), 118 to 138 (INWA…YVAF), and 148 to 168 (FKVF…GVYI). Basic and acidic residues predominate over residues 178–189 (LPKDKHQQRDQE). Residues 178-206 (LPKDKHQQRDQETQNDTQQELSGKNTEEK) form a disordered region. Positions 191–206 (QNDTQQELSGKNTEEK) are enriched in polar residues.

Belongs to the YciB family.

The protein localises to the cell inner membrane. Functionally, plays a role in cell envelope biogenesis, maintenance of cell envelope integrity and membrane homeostasis. This is Inner membrane-spanning protein YciB from Vibrio atlanticus (strain LGP32) (Vibrio splendidus (strain Mel32)).